The chain runs to 443 residues: EGF-containing fibulin-like extracellular matrix protein 2 (443 aa).

The N-terminal stretch at 1–25 (MLPFASCLPGSLLLWALLLLLLGAA) is a signal peptide. An EGF-like 1; atypical domain is found at 36-81 (YTECTDGYEWDADSQHCRDVNECLTIPEACKGEMKCINHYGGYLCL). Intrachain disulfides connect cysteine 58-cysteine 121, cysteine 65-cysteine 80, cysteine 71-cysteine 109, cysteine 127-cysteine 140, cysteine 134-cysteine 149, cysteine 151-cysteine 162, cysteine 168-cysteine 177, cysteine 173-cysteine 186, cysteine 188-cysteine 201, cysteine 207-cysteine 217, cysteine 213-cysteine 226, cysteine 228-cysteine 241, cysteine 247-cysteine 258, cysteine 254-cysteine 267, cysteine 269-cysteine 281, cysteine 287-cysteine 300, cysteine 294-cysteine 309, and cysteine 315-cysteine 327. Positions 123–163 (DVDECAQALHDCRPSQDCHNLPGSYQCTCPDGYRKVGPECV) constitute an EGF-like 2; calcium-binding domain. The EGF-like 3; calcium-binding domain maps to 164–202 (DIDECRYRYCQHRCVNLPGSFRCQCEPGFQLGPNNRSCV). An N-linked (GlcNAc...) asparagine glycan is attached at asparagine 198. The EGF-like 4; calcium-binding domain occupies 203–242 (DVNECDMGAPCEQRCFNSYGTFLCRCNQGYELHRDGFSCS). The EGF-like 5; calcium-binding domain occupies 243-282 (DIDECSYSSYLCQYRCVNEPGRFSCHCPQGYQLLATRLCQ). The EGF-like 6; calcium-binding domain occupies 283–328 (DIDECETGAHQCSEAQTCVNFHGGYRCVDTNRCVEPYVQVSDNRCF). N-linked (GlcNAc...) asparagine glycosylation occurs at asparagine 394.

It belongs to the fibulin family. In terms of assembly, homodimer; disulfide-linked. Multimer; allows heparin binding. Monomer. Interacts with FBN1 (via N-terminal domain); this interaction inhibits EFEMP2 binding to LOX and ELN. Interacts with LOX (via propeptide); this interaction is strong and facilitates formation of ternary complexes with ELN during elastic fiber assembly; this interaction limits interaction of EFEMP2 with FBLN5. Interacts with PITX2. Interacts with ELN with moderate affinity; this interaction regulates ELN self-assembly maturation stage. Interacts with FBLN5 with moderate affinity. Interacts with LOXL1 (via propeptide), LTBP1 and TGFB1 stronger than with LOXL2 and LTBP3. Interacts with PCOLCE. Interacts with collagen type IV trimer (COL4A1-COL4A1-COL4A2), NID2 and moderately with COL15A1-derived endostatin. Interacts with EMILIN1; this interaction promotes the incorporation of EFEMP2 into the extracellular matrix. Interacts with LTBP4; the LTBP4 long form (LTBP4L) has a stronger binding affinity than the LTBP4 short form and the LTBP4 long form promotes fibrillar deposition of EFEMP2. Post-translationally, N-glycosylated; contains mostly complex-type glycans. Not O-glycosylated. In terms of processing, cleaved by ELANE; produces a 50-55 kDa fragment. Cleaved by MMP2 and MMP9; produces several fragments.

The protein resides in the secreted. The protein localises to the extracellular space. It localises to the extracellular matrix. It is found in the basement membrane. Plays a crucial role in elastic fiber formation in tissue, and in the formation of ultrastructural connections between elastic laminae and smooth muscle cells in the aorta, therefore participates in terminal differentiation and maturation of smooth muscle cell (SMC) and in the mechanical properties and wall integrity maintenance of the aorta. In addition, is involved in the control of collagen fibril assembly in tissue throught proteolytic activation of LOX leading to cross- linking of collagen and elastin. Also promotes ELN coacervation and participates in the deposition of ELN coacervates on to microfibrils but also regulates ELN cross- linking through LOX interaction. Moreover adheres to the cells through heparin binding in a calcium-dependent manner and regulates vascularlar smooth muscle cells proliferation through angiotensin signaling. This chain is EGF-containing fibulin-like extracellular matrix protein 2, found in Cricetulus griseus (Chinese hamster).